We begin with the raw amino-acid sequence, 128 residues long: Sulfurtransferase TusD (128 aa).

Cysteine 78 serves as the catalytic Cysteine persulfide intermediate.

It belongs to the DsrE/TusD family. As to quaternary structure, heterohexamer, formed by a dimer of trimers. The hexameric TusBCD complex contains 2 copies each of TusB, TusC and TusD. The TusBCD complex interacts with TusE.

Its subcellular location is the cytoplasm. In terms of biological role, part of a sulfur-relay system required for 2-thiolation of 5-methylaminomethyl-2-thiouridine (mnm(5)s(2)U) at tRNA wobble positions. Accepts sulfur from TusA and transfers it in turn to TusE. The polypeptide is Sulfurtransferase TusD (Shigella boydii serotype 18 (strain CDC 3083-94 / BS512)).